A 270-amino-acid chain; its full sequence is 5'-AMP-activated protein kinase subunit beta-1 (270 aa).

The segment at 1–46 is disordered; the sequence is MGNTSSERAALERHGGHKTPRRDSSGGTKDGDRPKILMDSPEDADL. Gly-2 is lipidated: N-myristoyl glycine. Residue Thr-4 is modified to Phosphothreonine. A phosphoserine mark is found at Ser-5 and Ser-6. Thr-19 carries the phosphothreonine modification. The span at 21–36 shows a compositional bias: basic and acidic residues; that stretch reads RRDSSGGTKDGDRPKI. 2 positions are modified to phosphoserine; by autocatalysis: Ser-24 and Ser-25. Ser-40, Ser-96, and Ser-101 each carry phosphoserine. Positions 68–163 are glycogen-binding domain; it reads EVNDKAPAQA…QVKKTDFEVF (96 aa). Ser-108 is subject to Phosphoserine; by autocatalysis. Residue Thr-148 is modified to Phosphothreonine. Ser-182 carries the post-translational modification Phosphoserine.

The protein belongs to the 5'-AMP-activated protein kinase beta subunit family. As to quaternary structure, AMPK is a heterotrimer of an alpha catalytic subunit (PRKAA1 or PRKAA2), a beta (PRKAB1 or PRKAB2) and a gamma non-catalytic subunits (PRKAG1, PRKAG2 or PRKAG3). Interacts with FNIP1 and FNIP2. Phosphorylated when associated with the catalytic subunit (PRKAA1 or PRKAA2). Phosphorylated by ULK1; leading to negatively regulate AMPK activity and suggesting the existence of a regulatory feedback loop between ULK1 and AMPK.

In terms of biological role, non-catalytic subunit of AMP-activated protein kinase (AMPK), an energy sensor protein kinase that plays a key role in regulating cellular energy metabolism. In response to reduction of intracellular ATP levels, AMPK activates energy-producing pathways and inhibits energy-consuming processes: inhibits protein, carbohydrate and lipid biosynthesis, as well as cell growth and proliferation. AMPK acts via direct phosphorylation of metabolic enzymes, and by longer-term effects via phosphorylation of transcription regulators. Also acts as a regulator of cellular polarity by remodeling the actin cytoskeleton; probably by indirectly activating myosin. Beta non-catalytic subunit acts as a scaffold on which the AMPK complex assembles, via its C-terminus that bridges alpha (PRKAA1 or PRKAA2) and gamma subunits (PRKAG1, PRKAG2 or PRKAG3). In Pongo abelii (Sumatran orangutan), this protein is 5'-AMP-activated protein kinase subunit beta-1 (PRKAB1).